The sequence spans 230 residues: Cytidylate kinase (230 aa).

Position 13–21 (13–21 (GPAGTGKSS)) interacts with ATP.

The protein belongs to the cytidylate kinase family. Type 1 subfamily.

The protein resides in the cytoplasm. The enzyme catalyses CMP + ATP = CDP + ADP. It carries out the reaction dCMP + ATP = dCDP + ADP. This is Cytidylate kinase from Mycobacterium tuberculosis (strain ATCC 25177 / H37Ra).